Reading from the N-terminus, the 146-residue chain is Large ribosomal subunit protein uL15 (146 aa).

A disordered region spans residues 1–42 (MTIKLHDLQPARGSKTTRTRVGRGEASKGKTAGRGTKGTKAR).

It belongs to the universal ribosomal protein uL15 family. Part of the 50S ribosomal subunit.

Its function is as follows. Binds to the 23S rRNA. The protein is Large ribosomal subunit protein uL15 of Mycobacterium leprae (strain Br4923).